The primary structure comprises 136 residues: Protein PsiE homolog (136 aa).

A run of 4 helical transmembrane segments spans residues 15-35, 58-78, 82-102, and 108-128; these read AMQA…VVFL, VEGL…VKYF, FHFP…RLII, and PLAV…LWLC.

This sequence belongs to the PsiE family.

The protein localises to the cell inner membrane. The chain is Protein PsiE homolog from Klebsiella pneumoniae subsp. pneumoniae (strain ATCC 700721 / MGH 78578).